We begin with the raw amino-acid sequence, 448 residues long: tRNA-2-methylthio-N(6)-dimethylallyladenosine synthase (448 aa).

The 118-residue stretch at 3–120 (KKLFIKTHGC…LPTMLDSRQG (118 aa)) folds into the MTTase N-terminal domain. 6 residues coordinate [4Fe-4S] cluster: cysteine 12, cysteine 49, cysteine 83, cysteine 158, cysteine 162, and cysteine 165. Positions 144–376 (TSDGATAFVS…QERLNQQTMQ (233 aa)) constitute a Radical SAM core domain. Residues 379–444 (RRMVGNTERI…PNSLRGDLAS (66 aa)) form the TRAM domain.

The protein belongs to the methylthiotransferase family. MiaB subfamily. As to quaternary structure, monomer. Requires [4Fe-4S] cluster as cofactor.

The protein resides in the cytoplasm. It carries out the reaction N(6)-dimethylallyladenosine(37) in tRNA + (sulfur carrier)-SH + AH2 + 2 S-adenosyl-L-methionine = 2-methylsulfanyl-N(6)-dimethylallyladenosine(37) in tRNA + (sulfur carrier)-H + 5'-deoxyadenosine + L-methionine + A + S-adenosyl-L-homocysteine + 2 H(+). Its function is as follows. Catalyzes the methylthiolation of N6-(dimethylallyl)adenosine (i(6)A), leading to the formation of 2-methylthio-N6-(dimethylallyl)adenosine (ms(2)i(6)A) at position 37 in tRNAs that read codons beginning with uridine. This chain is tRNA-2-methylthio-N(6)-dimethylallyladenosine synthase, found in Chromohalobacter salexigens (strain ATCC BAA-138 / DSM 3043 / CIP 106854 / NCIMB 13768 / 1H11).